The sequence spans 287 residues: Ribosomal RNA small subunit methyltransferase A (287 aa).

The S-adenosyl-L-methionine site is built by asparagine 28, leucine 30, glycine 55, glutamate 76, aspartate 101, and asparagine 125.

It belongs to the class I-like SAM-binding methyltransferase superfamily. rRNA adenine N(6)-methyltransferase family. RsmA subfamily.

Its subcellular location is the cytoplasm. The catalysed reaction is adenosine(1518)/adenosine(1519) in 16S rRNA + 4 S-adenosyl-L-methionine = N(6)-dimethyladenosine(1518)/N(6)-dimethyladenosine(1519) in 16S rRNA + 4 S-adenosyl-L-homocysteine + 4 H(+). Its function is as follows. Specifically dimethylates two adjacent adenosines (A1518 and A1519) in the loop of a conserved hairpin near the 3'-end of 16S rRNA in the 30S particle. May play a critical role in biogenesis of 30S subunits. This chain is Ribosomal RNA small subunit methyltransferase A, found in Alkaliphilus oremlandii (strain OhILAs) (Clostridium oremlandii (strain OhILAs)).